The primary structure comprises 210 residues: Chloramphenicol acetyltransferase (210 aa).

Residue H79 is part of the active site.

This sequence belongs to the transferase hexapeptide repeat family.

The catalysed reaction is chloramphenicol + acetyl-CoA = chloramphenicol 3-acetate + CoA. Functionally, this enzyme is an effector of chloramphenicol resistance in bacteria. This Escherichia coli protein is Chloramphenicol acetyltransferase (catB2).